Reading from the N-terminus, the 589-residue chain is Probable translation initiation factor IF-2 (589 aa).

The region spanning 14–231 (LRQPIVCVLG…GLAQRFLESE (218 aa)) is the tr-type G domain. Residues 23–30 (GHVDHGKT) form a G1 region. GTP is bound at residue 23 to 30 (GHVDHGKT). A G2 region spans residues 48-52 (GITQR). A G3 region spans residues 84-87 (DTPG). Residues 84–88 (DTPGH) and 138–141 (NKID) contribute to the GTP site. The segment at 138-141 (NKID) is G4. Positions 206 to 208 (SAK) are G5.

The protein belongs to the TRAFAC class translation factor GTPase superfamily. Classic translation factor GTPase family. IF-2 subfamily.

Its function is as follows. Function in general translation initiation by promoting the binding of the formylmethionine-tRNA to ribosomes. Seems to function along with eIF-2. The sequence is that of Probable translation initiation factor IF-2 from Thermoplasma volcanium (strain ATCC 51530 / DSM 4299 / JCM 9571 / NBRC 15438 / GSS1).